Consider the following 154-residue polypeptide: Ribonuclease H (154 aa).

The RNase H type-1 domain occupies 1–142 (MTKHVEIFTD…CDELARTAAE (142 aa)). 4 residues coordinate Mg(2+): Asp10, Glu48, Asp70, and Asp134.

Belongs to the RNase H family. As to quaternary structure, monomer. Requires Mg(2+) as cofactor.

The protein localises to the cytoplasm. It catalyses the reaction Endonucleolytic cleavage to 5'-phosphomonoester.. Endonuclease that specifically degrades the RNA of RNA-DNA hybrids. This is Ribonuclease H from Vibrio campbellii (strain ATCC BAA-1116).